A 314-amino-acid polypeptide reads, in one-letter code: MIEIEKPRIETIEISEDAKFGKFVVEPLERGYGTTLGNSLRRILLSSLPGAAVKYIEIEGVLHEFSAIDNVVEDVSTIIMNIKKLALKIYSEEDKTLEIDVKDEGDVTASDITHDSDVEILNPEIKIATVSKGGHLKIRLVANKGRGYALAEQNKTSDLPIGVIPVDSLYSPVERVNYTVENTRVGQSSDFDKLTLDVWTNGSITPQESVSLAAKILTEHLNIFVGLTDEAQNAEIMIEKEEDQKEKVLEMSIEELDLSVRSYNCLKRAGINSVQELADKSEADMMKVRNLGRKSLEEVKYKLEDLGLGLRKED.

The interval 1-228 (MIEIEKPRIE…EHLNIFVGLT (228 aa)) is alpha N-terminal domain (alpha-NTD). An alpha C-terminal domain (alpha-CTD) region spans residues 245–314 (KEKVLEMSIE…DLGLGLRKED (70 aa)).

The protein belongs to the RNA polymerase alpha chain family. As to quaternary structure, homodimer. The RNAP catalytic core consists of 2 alpha, 1 beta, 1 beta' and 1 omega subunit. When a sigma factor is associated with the core the holoenzyme is formed, which can initiate transcription.

The enzyme catalyses RNA(n) + a ribonucleoside 5'-triphosphate = RNA(n+1) + diphosphate. Functionally, DNA-dependent RNA polymerase catalyzes the transcription of DNA into RNA using the four ribonucleoside triphosphates as substrates. The protein is DNA-directed RNA polymerase subunit alpha of Staphylococcus saprophyticus subsp. saprophyticus (strain ATCC 15305 / DSM 20229 / NCIMB 8711 / NCTC 7292 / S-41).